Here is a 248-residue protein sequence, read N- to C-terminus: Trypsin I-P1 (248 aa).

The first 15 residues, M1–A15, serve as a signal peptide directing secretion. The propeptide at F16–K25 is activation peptide. The region spanning I26–S246 is the Peptidase S1 domain. 6 cysteine pairs are disulfide-bonded: C32/C162, C50/C66, C134/C235, C141/C208, C173/C187, and C198/C222. H65 (charge relay system) is an active-site residue. Ca(2+) is bound by residues E77, N79, and E87. D109 serves as the catalytic Charge relay system. The active-site Charge relay system is S202.

It belongs to the peptidase S1 family. The cofactor is Ca(2+). In terms of tissue distribution, high levels are seen in the pancreas while lower levels are found in the liver, spleen and thymus.

Its subcellular location is the secreted. It is found in the extracellular space. The enzyme catalyses Preferential cleavage: Arg-|-Xaa, Lys-|-Xaa.. This Gallus gallus (Chicken) protein is Trypsin I-P1.